Here is a 643-residue protein sequence, read N- to C-terminus: Melanoma-associated antigen C3 (643 aa).

MAGE domains lie at 184-384 and 456-643; these read LDEK…AAGM and LDEK…FCPE. Positions 347 to 421 are disordered; that stretch reads NPQGLAGHRQ…PQSPLDSCSS (75 aa). The span at 354–363 shows a compositional bias: basic and acidic residues; it reads HRQEDGRRGL. The segment covering 383-414 has biased composition (pro residues); that stretch reads GMPPLPQSPPEIPPQGPPKISPQGPPQSPPQS. 3 positions are modified to phosphothreonine: threonine 478, threonine 484, and threonine 485.

As to expression, expressed in testis. Not expressed in other normal tissues, but is expressed in tumors of different histological origins.

This is Melanoma-associated antigen C3 (MAGEC3) from Homo sapiens (Human).